We begin with the raw amino-acid sequence, 219 residues long: Large ribosomal subunit protein bL31m (219 aa).

2 stretches are compositionally biased toward basic and acidic residues: residues 169 to 181 (KKEE…KAAE) and 210 to 219 (KETRHYGKKK). 2 disordered regions span residues 169–188 (KKEE…ADPF) and 200–219 (TENM…GKKK).

Belongs to the bacterial ribosomal protein bL31 family. Highly divergent. In terms of assembly, component of the mitochondrial large ribosomal subunit (mt-LSU). Mature N.crassa 74S mitochondrial ribosomes consist of a small (37S) and a large (54S) subunit. The 37S small subunit contains a 16S ribosomal RNA (16S mt-rRNA) and 32 different proteins. The 54S large subunit contains a 23S rRNA (23S mt-rRNA) and 42 different proteins. bL31m bridges the mt-LSU central protuberance and the mt-SSU head.

Its subcellular location is the mitochondrion. Component of the mitochondrial ribosome (mitoribosome), a dedicated translation machinery responsible for the synthesis of mitochondrial genome-encoded proteins, including at least some of the essential transmembrane subunits of the mitochondrial respiratory chain. The mitoribosomes are attached to the mitochondrial inner membrane and translation products are cotranslationally integrated into the membrane. The polypeptide is Large ribosomal subunit protein bL31m (mrpl36) (Neurospora crassa (strain ATCC 24698 / 74-OR23-1A / CBS 708.71 / DSM 1257 / FGSC 987)).